A 401-amino-acid chain; its full sequence is Cytochrome P450 BJ-1 (401 aa).

Heme is bound at residue Cys-350.

Belongs to the cytochrome P450 family. The cofactor is heme.

Functionally, cytochromes P450 are a group of heme-thiolate monooxygenases. They oxidize a variety of structurally unrelated compounds, including steroids, fatty acids, and xenobiotics. In Bradyrhizobium diazoefficiens (strain JCM 10833 / BCRC 13528 / IAM 13628 / NBRC 14792 / USDA 110), this protein is Cytochrome P450 BJ-1 (cyp112).